A 163-amino-acid chain; its full sequence is Ribonuclease P protein subunit p25-like protein (163 aa).

2 disordered regions span residues 1-24 (MEQY…LPPD) and 126-163 (LDPS…DTRS). The span at 153–163 (RPRRRARDTRS) shows a compositional bias: basic residues.

This sequence belongs to the histone-like Alba family.

The protein resides in the nucleus. May be a component of ribonuclease P or MRP. This is Ribonuclease P protein subunit p25-like protein (Rpp25l) from Mus musculus (Mouse).